The following is a 277-amino-acid chain: 4-hydroxy-3-prenylphenylpyruvate oxygenase/4-hydroxy-3-prenylbenzoate synthase (277 aa).

The protein belongs to the aldolase class II family. Homotetramer. Fe(2+) serves as cofactor.

It catalyses the reaction 3-dimethylallyl-4-hydroxyphenylpyruvate + O2 = 3-dimethylallyl-4-hydroxymandelate + CO2. The catalysed reaction is 3-dimethylallyl-4-hydroxymandelate + O2 = 3-dimethylallyl-4-hydroxybenzoate + CO2 + H2O. The protein operates within antibiotic biosynthesis. Activated by ascorbate. Functionally, involved in the biosynthesis of ring A of the aminocoumarin antibiotic clorobiocin. Catalyzes two consecutive oxidative decarboxylations of 3-dimethylallyl-4-hydroxyphenylpyruvate (3DMA-4HPP) to yield 3-dimethylallyl-4-hydroxybenzoate (3DMA-4HB) via the 3-dimethylallyl-4-hydroxymandelic acid (3DMA-4HMA) intermediate. This chain is 4-hydroxy-3-prenylphenylpyruvate oxygenase/4-hydroxy-3-prenylbenzoate synthase, found in Streptomyces roseochromogenus subsp. oscitans.